Consider the following 267-residue polypeptide: Staphylococcal secretory antigen ssaA2 (267 aa).

Residues 1-27 (MKKIATATIATAGFATIAIASGNQAHA) form the signal peptide. Repeat copies occupy residues 83–85 (YNN), 86–88 (YNN), 89–91 (YNN), 95–97 (YNN), 101–103 (YNN), 104–106 (YSN), and 113–115 (YNN). Residues 83–115 (YNNYNNYNNGYSYNNYSRYNNYSNNNQSYNYNN) form a 7 X 3 AA repeats of Y-[NS]-N region. A Peptidase C51 domain is found at 146 to 267 (MAPSSNGRSI…SQAAGYNFIH (122 aa)).

The protein localises to the secreted. Functionally, not known; immunogenic protein. The chain is Staphylococcal secretory antigen ssaA2 (ssaA2) from Staphylococcus aureus (strain NCTC 8325 / PS 47).